Here is a 107-residue protein sequence, read N- to C-terminus: Small ribosomal subunit protein uS10c (107 aa).

It belongs to the universal ribosomal protein uS10 family. Part of the 30S ribosomal subunit.

Its subcellular location is the plastid. The protein localises to the chloroplast. Involved in the binding of tRNA to the ribosomes. This is Small ribosomal subunit protein uS10c from Phaeodactylum tricornutum (strain CCAP 1055/1).